The sequence spans 272 residues: 2-succinyl-6-hydroxy-2,4-cyclohexadiene-1-carboxylate synthase (272 aa).

This sequence belongs to the AB hydrolase superfamily. MenH family. As to quaternary structure, monomer.

It catalyses the reaction 5-enolpyruvoyl-6-hydroxy-2-succinyl-cyclohex-3-ene-1-carboxylate = (1R,6R)-6-hydroxy-2-succinyl-cyclohexa-2,4-diene-1-carboxylate + pyruvate. Its pathway is quinol/quinone metabolism; 1,4-dihydroxy-2-naphthoate biosynthesis; 1,4-dihydroxy-2-naphthoate from chorismate: step 3/7. It functions in the pathway quinol/quinone metabolism; menaquinone biosynthesis. Functionally, catalyzes a proton abstraction reaction that results in 2,5-elimination of pyruvate from 2-succinyl-5-enolpyruvyl-6-hydroxy-3-cyclohexene-1-carboxylate (SEPHCHC) and the formation of 2-succinyl-6-hydroxy-2,4-cyclohexadiene-1-carboxylate (SHCHC). The protein is 2-succinyl-6-hydroxy-2,4-cyclohexadiene-1-carboxylate synthase of Yersinia pestis (strain Pestoides F).